The chain runs to 267 residues: Hydroxyethylthiazole kinase 2 (267 aa).

M41 serves as a coordination point for substrate. Positions 116 and 166 each coordinate ATP. G193 lines the substrate pocket.

The protein belongs to the Thz kinase family. Mg(2+) serves as cofactor.

It catalyses the reaction 5-(2-hydroxyethyl)-4-methylthiazole + ATP = 4-methyl-5-(2-phosphooxyethyl)-thiazole + ADP + H(+). Its pathway is cofactor biosynthesis; thiamine diphosphate biosynthesis; 4-methyl-5-(2-phosphoethyl)-thiazole from 5-(2-hydroxyethyl)-4-methylthiazole: step 1/1. In terms of biological role, catalyzes the phosphorylation of the hydroxyl group of 4-methyl-5-beta-hydroxyethylthiazole (THZ). This chain is Hydroxyethylthiazole kinase 2, found in Streptococcus pneumoniae serotype 4 (strain ATCC BAA-334 / TIGR4).